The chain runs to 338 residues: Envelope glycoprotein K (338 aa).

An N-terminal signal peptide occupies residues 1–30 (MLAVRSLQHLTTVIFITAYGLVLAWYIVFG). The Extracellular segment spans residues 31–121 (ASPLHRCIYA…VNCLEALWDT (91 aa)). Positions 31–121 (ASPLHRCIYA…VNCLEALWDT (91 aa)) are involved in fusion. 2 N-linked (GlcNAc...) asparagine; by host glycosylation sites follow: Asn48 and Asn58. The chain crosses the membrane as a helical span at residues 122–140 (QMRLVVVGWFLYLAFVALH). Topologically, residues 141–212 (QRRCMFGVVS…DPVTFLYHRP (72 aa)) are cytoplasmic. A helical membrane pass occupies residues 213–233 (AIGVIVGCELLLRFVALGLIV). The Extracellular portion of the chain corresponds to 234 to 243 (GTALISRGAC). The chain crosses the membrane as a helical span at residues 244–264 (AITHPLFLTITTWCFVSIIAL). Over 265–301 (TELYFILRRGSAPKNAEPAAPRGRSKGWSGVCGRCCS) the chain is Cytoplasmic. The interaction with UL20 stretch occupies residues 265 to 301 (TELYFILRRGSAPKNAEPAAPRGRSKGWSGVCGRCCS). Residues 302 to 322 (IILSGIAVRLCYIAVVAGVVL) traverse the membrane as a helical segment. The Extracellular segment spans residues 323 to 338 (VALRYEQEIQRRLFDL).

The protein belongs to the alphaherpesvirinae glycoprotein K family. As to quaternary structure, interacts (via UL20 interaction region) with protein UL20 (via N-terminus); this interaction probably plays a role in the coordinate transport of protein UL20 and gK to the trans-Golgi network (TGN), and is required for the cell surface expression of gK. In terms of processing, N-glycosylated.

It is found in the host cell membrane. Its subcellular location is the host endosome membrane. The protein localises to the host Golgi apparatus membrane. In terms of biological role, glycoprotein that probably modulates membrane fusion events during secondary envelopment of cytoplasmic capsids that bud into specific trans-Golgi network (TGN)-derived membranes. Also plays a role, together with gB, in virus-induced cell-to-cell fusion (syncytia formation). Seems to block fusion of virions with infected-cell membranes. The polypeptide is Envelope glycoprotein K (gK) (Human herpesvirus 2 (strain HG52) (HHV-2)).